The following is a 596-amino-acid chain: Probable ATP-dependent RNA helicase DDX52 (596 aa).

Position 15 is an N6-acetyllysine (Lys15). Phosphoserine is present on Ser39. The interval 68–94 (LPDEEKTEESQIERKKQNRKKKKITSE) is disordered. A Q motif motif is present at residues 163–191 (QLDQEYKINSRLLQNILDAGFQTPTPIQM). The Helicase ATP-binding domain occupies 194 to 372 (IPVMLHGREL…RLNLDSVITV (179 aa)). 207-214 (APTGSGKT) is a binding site for ATP. The DEAD box motif lies at 316–319 (DESD). The region spanning 383–544 (TVEQELLFVG…PVPEYIKGFQ (162 aa)) is the Helicase C-terminal domain. The disordered stretch occupies residues 575–596 (AKDKRKKVTGQNKKKVAPEDKS). Positions 577–589 (DKRKKVTGQNKKK) are enriched in basic residues.

This sequence belongs to the DEAD box helicase family. DDX52/ROK1 subfamily.

It is found in the nucleus. The protein localises to the nucleolus. The catalysed reaction is ATP + H2O = ADP + phosphate + H(+). This is Probable ATP-dependent RNA helicase DDX52 (DDX52) from Bos taurus (Bovine).